The sequence spans 635 residues: Sodium- and chloride-dependent creatine transporter 1 (635 aa).

The tract at residues 1 to 28 is disordered; that stretch reads MAKKSAENGIYSVSGDEKKGPLIAPGPD. Residues 1 to 60 are Cytoplasmic-facing; it reads MAKKSAENGIYSVSGDEKKGPLIAPGPDGAPAKGDGPVGLGTPGGRLAVPPRETWTRQMD. Position 42 is a phosphothreonine (Thr-42). A helical transmembrane segment spans residues 61-81; sequence FIMSCVGFAVGLGNVWRFPYL. Topologically, residues 82–87 are extracellular; it reads CYKNGG. A helical transmembrane segment spans residues 88–108; that stretch reads GVFLIPYVLIALVGGIPIFFL. At 109 to 138 the chain is on the cytoplasmic side; it reads EISLGQFMKAGSINVWNICPLFKGLGYASM. The helical transmembrane segment at 139 to 159 threads the bilayer; sequence VIVFYCNTYYIMVLAWGFYYL. Residues 160-230 are Extracellular-facing; sequence VKSFTTTLPW…LSGGLEVPGA (71 aa). Residues Asn-192 and Asn-197 are each glycosylated (N-linked (GlcNAc...) asparagine). Residues 231–251 traverse the membrane as a helical segment; the sequence is LNWEVTLCLLACWVLVYFCVW. At 252 to 269 the chain is on the cytoplasmic side; sequence KGVKSTGKIVYFTATFPY. A helical transmembrane segment spans residues 270–290; the sequence is VVLVVLLVRGVLLPGALDGII. At 291–304 the chain is on the extracellular side; the sequence is YYLKPDWSKLGSPQ. The chain crosses the membrane as a helical span at residues 305 to 325; the sequence is VWIDAGTQIFFSYAIGLGALT. Residues 326-341 lie on the Cytoplasmic side of the membrane; sequence ALGSYNRFNNNCYKDA. The chain crosses the membrane as a helical span at residues 342–362; that stretch reads IILALINSGTSFFAGFVVFSI. Over 363–394 the chain is Extracellular; it reads LGFMAAEQGVHISKVAESGPGLAFIAYPRAVT. The chain crosses the membrane as a helical span at residues 395–415; that stretch reads LMPVAPLWAALFFFMLLLLGL. Over 416 to 444 the chain is Cytoplasmic; that stretch reads DSQFVGVEGFITGLLDLLPASYYFRFQRE. Residues 445–465 form a helical membrane-spanning segment; sequence ISVALCCALCFVIDLSMVTDG. Over 466–479 the chain is Extracellular; sequence GMYVFQLFDYYSAS. The helical transmembrane segment at 480–500 threads the bilayer; it reads GTTLLWQAFWECVVVAWVYGA. The Cytoplasmic portion of the chain corresponds to 501–520; it reads DRFMDDIACMIGYRPCPWMK. A helical transmembrane segment spans residues 521-541; that stretch reads WCWSFFTPLVCMGIFIFNVVY. Over 542 to 560 the chain is Extracellular; sequence YEPLVYNNTYVYPWWGEAM. N-linked (GlcNAc...) asparagine glycosylation is present at Asn-548. The helical transmembrane segment at 561-581 threads the bilayer; sequence GWAFALSSMLCVPLHLLGCLL. Residues 582-635 are Cytoplasmic-facing; the sequence is RAKGTMAERWQHLTQPIWGLHHLEYRAQDADVRGLTTLTPVSESSKVVVVESVM. Phosphothreonine occurs at positions 617 and 620. Ser-623 is subject to Phosphoserine.

It belongs to the sodium:neurotransmitter symporter (SNF) (TC 2.A.22) family. SLC6A8 subfamily. Glycosylated. Predominantly expressed in skeletal muscle and kidney. Also found in brain, heart, colon, testis and prostate.

The protein localises to the cell membrane. The protein resides in the apical cell membrane. It carries out the reaction creatine(out) + chloride(out) + 2 Na(+)(out) = creatine(in) + chloride(in) + 2 Na(+)(in). Creatine:sodium symporter which mediates the uptake of creatine. Plays an important role in supplying creatine to the brain via the blood-brain barrier. In Homo sapiens (Human), this protein is Sodium- and chloride-dependent creatine transporter 1 (SLC6A8).